The following is a 64-amino-acid chain: Large ribosomal subunit protein bL35 (64 aa).

Residues 18 to 39 are disordered; the sequence is GSGLVKHYPSNKHHKNTHKKEN. The span at 26–39 shows a compositional bias: basic residues; the sequence is PSNKHHKNTHKKEN.

This sequence belongs to the bacterial ribosomal protein bL35 family.

The protein is Large ribosomal subunit protein bL35 of Symbiobacterium thermophilum (strain DSM 24528 / JCM 14929 / IAM 14863 / T).